The primary structure comprises 363 residues: NAD(P)H-quinone oxidoreductase subunit 1, chloroplastic (363 aa).

6 consecutive transmembrane segments (helical) span residues 28 to 48 (WVLV…LVIV), 98 to 118 (FSIG…VIPF), 127 to 147 (LPIG…GLLM), 248 to 268 (YSGI…LVSS), 300 to 320 (VFGM…FLFI), and 343 to 363 (FLLP…LFSL).

It belongs to the complex I subunit 1 family. In terms of assembly, NDH is composed of at least 16 different subunits, 5 of which are encoded in the nucleus.

The protein localises to the plastid. Its subcellular location is the chloroplast thylakoid membrane. The catalysed reaction is a plastoquinone + NADH + (n+1) H(+)(in) = a plastoquinol + NAD(+) + n H(+)(out). It catalyses the reaction a plastoquinone + NADPH + (n+1) H(+)(in) = a plastoquinol + NADP(+) + n H(+)(out). Its function is as follows. NDH shuttles electrons from NAD(P)H:plastoquinone, via FMN and iron-sulfur (Fe-S) centers, to quinones in the photosynthetic chain and possibly in a chloroplast respiratory chain. The immediate electron acceptor for the enzyme in this species is believed to be plastoquinone. Couples the redox reaction to proton translocation, and thus conserves the redox energy in a proton gradient. The protein is NAD(P)H-quinone oxidoreductase subunit 1, chloroplastic of Cucumis sativus (Cucumber).